The following is a 244-amino-acid chain: Lymphotoxin-beta (244 aa).

The Cytoplasmic portion of the chain corresponds to 1–18 (MGALGLEGRGGRLQGRGS). Residues 19 to 48 (LLLAVAGATSLVTLLLAVPITVLAVLALVP) form a helical; Signal-anchor for type II membrane protein membrane-spanning segment. Residues 49–244 (QDQGGLVTDT…KTFFGAVMVG (196 aa)) lie on the Extracellular side of the membrane. One can recognise a THD domain in the interval 88–243 (PAAHLIGAPL…GKTFFGAVMV (156 aa)). N-linked (GlcNAc...) asparagine glycosylation occurs at N222.

This sequence belongs to the tumor necrosis factor family. As to quaternary structure, heterotrimer of either two LTB and one LTA subunits or (less prevalent) two LTA and one LTB subunits.

It is found in the membrane. In terms of biological role, cytokine that binds to LTBR/TNFRSF3. May play a specific role in immune response regulation. Provides the membrane anchor for the attachment of the heterotrimeric complex to the cell surface. In Macaca mulatta (Rhesus macaque), this protein is Lymphotoxin-beta (LTB).